A 125-amino-acid chain; its full sequence is Holo-[acyl-carrier-protein] synthase (125 aa).

2 residues coordinate Mg(2+): aspartate 8 and glutamate 56.

Belongs to the P-Pant transferase superfamily. AcpS family. Mg(2+) is required as a cofactor.

Its subcellular location is the cytoplasm. It carries out the reaction apo-[ACP] + CoA = holo-[ACP] + adenosine 3',5'-bisphosphate + H(+). In terms of biological role, transfers the 4'-phosphopantetheine moiety from coenzyme A to a Ser of acyl-carrier-protein. The sequence is that of Holo-[acyl-carrier-protein] synthase from Borrelia turicatae (strain 91E135).